Consider the following 190-residue polypeptide: Orotate phosphoribosyltransferase (190 aa).

114 to 122 lines the 5-phospho-alpha-D-ribose 1-diphosphate pocket; the sequence is EDVITTGGS. Orotate contacts are provided by threonine 118 and arginine 146.

It belongs to the purine/pyrimidine phosphoribosyltransferase family. PyrE subfamily. Homodimer. Requires Mg(2+) as cofactor.

It catalyses the reaction orotidine 5'-phosphate + diphosphate = orotate + 5-phospho-alpha-D-ribose 1-diphosphate. Its pathway is pyrimidine metabolism; UMP biosynthesis via de novo pathway; UMP from orotate: step 1/2. Catalyzes the transfer of a ribosyl phosphate group from 5-phosphoribose 1-diphosphate to orotate, leading to the formation of orotidine monophosphate (OMP). The sequence is that of Orotate phosphoribosyltransferase from Caldicellulosiruptor bescii (strain ATCC BAA-1888 / DSM 6725 / KCTC 15123 / Z-1320) (Anaerocellum thermophilum).